We begin with the raw amino-acid sequence, 574 residues long: Polyamine aminopropyltransferase (574 aa).

7 helical membrane-spanning segments follow: residues Val-22 to Leu-42, Ala-55 to Ala-75, Leu-90 to Gly-110, Leu-144 to Ala-164, Ile-188 to Leu-208, Ala-209 to Trp-229, and Leu-237 to Pro-257. Residues Ile-254–His-510 are spermidine synthase. A PABS domain is found at Pro-257 to Gly-505. An S-methyl-5'-thioadenosine-binding site is contributed by Gln-281. 2 residues coordinate spermidine: His-317 and Asp-341. S-methyl-5'-thioadenosine is bound by residues Asp-360 and Asp-403–Ala-404. Asp-424 serves as the catalytic Proton acceptor.

The protein belongs to the spermidine/spermine synthase family. Homodimer or homotetramer.

It localises to the cell membrane. It catalyses the reaction S-adenosyl 3-(methylsulfanyl)propylamine + putrescine = S-methyl-5'-thioadenosine + spermidine + H(+). The protein operates within amine and polyamine biosynthesis; spermidine biosynthesis; spermidine from putrescine: step 1/1. Its function is as follows. Catalyzes the irreversible transfer of a propylamine group from the amino donor S-adenosylmethioninamine (decarboxy-AdoMet) to putrescine (1,4-diaminobutane) to yield spermidine. This is Polyamine aminopropyltransferase from Shewanella oneidensis (strain ATCC 700550 / JCM 31522 / CIP 106686 / LMG 19005 / NCIMB 14063 / MR-1).